We begin with the raw amino-acid sequence, 239 residues long: Alpha-acetolactate decarboxylase (239 aa).

This sequence belongs to the alpha-acetolactate decarboxylase family.

The enzyme catalyses (2S)-2-acetolactate + H(+) = (R)-acetoin + CO2. It functions in the pathway polyol metabolism; (R,R)-butane-2,3-diol biosynthesis; (R,R)-butane-2,3-diol from pyruvate: step 2/3. The enzyme is active only in the presence of branched-chain amino acids. Valine results in much higher activation than leucine or isoleucine. Its function is as follows. Converts acetolactate into acetoin. Regulates leucine and valine biosynthesis by diverting the flux of alpha-acetolactate towards acetoin when the branched-chain amino acids are present in high concentration. The sequence is that of Alpha-acetolactate decarboxylase (aldC) from Streptococcus thermophilus.